We begin with the raw amino-acid sequence, 462 residues long: Cysteine--tRNA ligase (462 aa).

C30 contacts Zn(2+). The short motif at 32–42 (MTVYDYCHVGH) is the 'HIGH' region element. Positions 214, 239, and 243 each coordinate Zn(2+). Residues 271–275 (KMSKS) carry the 'KMSKS' region motif. Position 274 (K274) interacts with ATP.

Belongs to the class-I aminoacyl-tRNA synthetase family. In terms of assembly, monomer. Zn(2+) is required as a cofactor.

It localises to the cytoplasm. It carries out the reaction tRNA(Cys) + L-cysteine + ATP = L-cysteinyl-tRNA(Cys) + AMP + diphosphate. In Cupriavidus necator (strain ATCC 17699 / DSM 428 / KCTC 22496 / NCIMB 10442 / H16 / Stanier 337) (Ralstonia eutropha), this protein is Cysteine--tRNA ligase.